The chain runs to 330 residues: Tryptophan--tRNA ligase (330 aa).

Residues 10-12 (QTT) and 18-19 (GN) each bind ATP. Residues 11–19 (TTGALHLGN) carry the 'HIGH' region motif. Asp134 is a binding site for L-tryptophan. ATP is bound by residues 146-148 (GED), Ile186, and 195-199 (KMSKS). A 'KMSKS' region motif is present at residues 195-199 (KMSKS).

Belongs to the class-I aminoacyl-tRNA synthetase family. In terms of assembly, homodimer.

It is found in the cytoplasm. It catalyses the reaction tRNA(Trp) + L-tryptophan + ATP = L-tryptophyl-tRNA(Trp) + AMP + diphosphate + H(+). In terms of biological role, catalyzes the attachment of tryptophan to tRNA(Trp). This Rickettsia typhi (strain ATCC VR-144 / Wilmington) protein is Tryptophan--tRNA ligase.